Consider the following 126-residue polypeptide: Urease subunit beta (126 aa).

Belongs to the urease beta subunit family. Heterotrimer of UreA (gamma), UreB (beta) and UreC (alpha) subunits. Three heterotrimers associate to form the active enzyme.

Its subcellular location is the cytoplasm. The catalysed reaction is urea + 2 H2O + H(+) = hydrogencarbonate + 2 NH4(+). The protein operates within nitrogen metabolism; urea degradation; CO(2) and NH(3) from urea (urease route): step 1/1. This is Urease subunit beta from Sporosarcina pasteurii (Bacillus pasteurii).